Consider the following 471-residue polypeptide: Phosphoglycerate kinase (471 aa).

Substrate is bound by residues 24 to 26, Arg-41, 64 to 67, Arg-127, and Arg-169; these read DFN and HLSR. ATP-binding positions include Lys-220, Gly-307, Glu-338, and 368–371; that span reads GGDS. Residues 417–471 are disordered; sequence KVEAVKEKTTTTTESASKEKSSTAKTASKPATSKTTAAKKPAEKKPAAKKPAAKK. The segment covering 439–455 has biased composition (low complexity); that stretch reads TAKTASKPATSKTTAAK.

It belongs to the phosphoglycerate kinase family. In terms of assembly, monomer.

The protein resides in the cytoplasm. It catalyses the reaction (2R)-3-phosphoglycerate + ATP = (2R)-3-phospho-glyceroyl phosphate + ADP. The protein operates within carbohydrate degradation; glycolysis; pyruvate from D-glyceraldehyde 3-phosphate: step 2/5. This is Phosphoglycerate kinase from Malacoplasma penetrans (strain HF-2) (Mycoplasma penetrans).